A 430-amino-acid chain; its full sequence is T-kininogen 1 (430 aa).

Positions 1-18 (MKLITILLLCSRLLPSLA) are cleaved as a signal peptide. Gln-19 carries the pyrrolidone carboxylic acid modification. A Cystatin kininogen-type 1 domain is found at 28 to 131 (CNDETVFQAV…TQICNITPGK (104 aa)). Disulfide bonds link Cys-28–Cys-404, Cys-83–Cys-94, Cys-107–Cys-125, Cys-141–Cys-144, Cys-205–Cys-217, Cys-228–Cys-247, Cys-263–Cys-266, Cys-327–Cys-339, and Cys-350–Cys-369. An N-linked (GlcNAc...) asparagine glycan is attached at Asn-82. Residues 150-253 (MDSSDLKPVL…SQSCDLYPGD (104 aa)) form the Cystatin kininogen-type 2 domain. N-linked (GlcNAc...) asparagine glycans are attached at residues Asn-168 and Asn-204. The 104-residue stretch at 272–375 (VDSPELKEAL…TVRCQALDMM (104 aa)) folds into the Cystatin kininogen-type 3 domain. Asn-326 is a glycosylation site (N-linked (GlcNAc...) asparagine). A disordered region spans residues 411–430 (SKARAGPAPDHQAEASTVTP).

As T-kinin is preceded by a Met instead of an Arg or Lys, it is not released from its precursor by either tissue or plasma kallikrein. Plasma.

The protein localises to the secreted. It localises to the extracellular space. Its function is as follows. Kininogens are plasma glycoproteins with a number of functions: (1) as precursor of the active peptide bradykinin they effect smooth muscle contraction, induction of hypotension and increase of vascular permeability. (2) They play a role in blood coagulation by helping to position optimally prekallikrein and factor XI next to factor XII. (3) They are inhibitor of thiol proteases. This is T-kininogen 1 (Map1) from Rattus norvegicus (Rat).